A 549-amino-acid chain; its full sequence is MNYKVKFEHVTKKYKLYNKPFDKLKDLFFRSKDGEYHYALNNISFEVPEGEIVGIVGLNGSGKSTLSNLIAGVTMPNKGTVDIKGSAALIAISSGLNGQLTGIENIELKGLMMGITKEKIKEIIPEIIDFADIGKFMYQPVKTYSSGMKSRLGFAISVHINPDILVIDEALSVGDQTFTKKCLDKMNEFKEQGKTIFFISHSLSQVKSFCTKALWLHYGQVKEYGDIKEIVDHYDEFLKKYNQMSVEERKDLRKEQISQFQHGLLQEDQTGRERKRKKGKKTSRKFKKKRVLITGVCIALLTGIISTGYYYKNLLPFNSENKYAEKVASKENVTESKQMVKKEKGAAKYIVNSNGISIREEADASSKRLAIANFGDIFTISDSNKNEKKDVEWIQITLSNGEIGWISTKFIEPFKSNNNIIEDAKLADVTALLKRVYGGNMVSAPTYFGKTLNELETTYPQPLNPLPSMTGKTIVKDGNIQFGISQDKVVEVVFQDISMSIAKLHELLGKESLSNDAEKNYFYETKSYYIAARSDQTHKEIQSISIVKK.

Residues 22-243 (DKLKDLFFRS…YDEFLKKYNQ (222 aa)) enclose the ABC transporter domain. Residue 57–64 (GLNGSGKS) coordinates ATP. Residues 244-549 (MSVEERKDLR…EIQSISIVKK (306 aa)) are unknown. One can recognise an SH3b domain in the interval 346–415 (AAKYIVNSNG…ISTKFIEPFK (70 aa)).

Belongs to the ABC transporter superfamily. Teichoic acids exporter (TC 3.A.1.104.1) family. As to quaternary structure, the complex is composed of two ATP-binding proteins (TagH) and two transmembrane proteins (TagG).

The protein localises to the cell membrane. The catalysed reaction is ATP + H2O + teichoic acidSide 1 = ADP + phosphate + teichoic acidSide 2.. Functionally, part of the ABC transporter complex TagGH involved in teichoic acids export. Responsible for energy coupling to the transport system. The protein is Teichoic acids export ATP-binding protein TagH of Bacillus anthracis.